A 502-amino-acid polypeptide reads, in one-letter code: Cobyric acid synthase (502 aa).

A GATase cobBQ-type domain is found at Ile260–Phe433. Catalysis depends on Cys341, which acts as the Nucleophile. The active site involves His425.

The protein belongs to the CobB/CobQ family. CobQ subfamily.

The protein operates within cofactor biosynthesis; adenosylcobalamin biosynthesis. Functionally, catalyzes amidations at positions B, D, E, and G on adenosylcobyrinic A,C-diamide. NH(2) groups are provided by glutamine, and one molecule of ATP is hydrogenolyzed for each amidation. The polypeptide is Cobyric acid synthase (Streptomyces avermitilis (strain ATCC 31267 / DSM 46492 / JCM 5070 / NBRC 14893 / NCIMB 12804 / NRRL 8165 / MA-4680)).